The primary structure comprises 173 residues: Bifunctional protein PyrR (173 aa).

A PRPP-binding motif is present at residues 94–106 (VILIDDVLYTGRT).

This sequence belongs to the purine/pyrimidine phosphoribosyltransferase family. PyrR subfamily. In terms of assembly, homodimer and homohexamer; in equilibrium.

The enzyme catalyses UMP + diphosphate = 5-phospho-alpha-D-ribose 1-diphosphate + uracil. Regulates transcriptional attenuation of the pyrimidine nucleotide (pyr) operon by binding in a uridine-dependent manner to specific sites on pyr mRNA. This disrupts an antiterminator hairpin in the RNA and favors formation of a downstream transcription terminator, leading to a reduced expression of downstream genes. Functionally, also displays a weak uracil phosphoribosyltransferase activity which is not physiologically significant. The protein is Bifunctional protein PyrR of Streptococcus gordonii (strain Challis / ATCC 35105 / BCRC 15272 / CH1 / DL1 / V288).